A 607-amino-acid chain; its full sequence is Zinc finger protein 750 (607 aa).

The segment at 25–51 (YQCFQCPFTCNIKSHLFNHMKYNLCKN) adopts a CCHC-type zinc-finger fold. The Zn(2+) site is built by Cys-27, Cys-30, His-43, and Cys-49. Polar residues predominate over residues 60-78 (MEQTGKASRASQHSPAFSH). Disordered stretches follow at residues 60–133 (MEQT…DKSE), 318–467 (RAVQ…SSQE), 482–511 (QALP…QDLE), and 575–607 (GQKR…SQNC). 2 stretches are compositionally biased toward basic and acidic residues: residues 79-133 (NSKE…DKSE) and 318-334 (RAVQ…RESP). A compositionally biased stretch (low complexity) spans 369-380 (HSGSQSHIISGS). A compositionally biased stretch (acidic residues) spans 421–432 (DKEEDEETEEEI). The span at 452–462 (HYPDRELHYDS) shows a compositional bias: basic and acidic residues. Residues 496-507 (ISNAEVSTTESP) are compositionally biased toward polar residues. Positions 579 to 592 (ANNRPLRHTNKRAK) are enriched in basic residues.

The protein resides in the nucleus. In terms of biological role, transcription factor involved in epidermis differentiation. The protein is Zinc finger protein 750 (znf750) of Danio rerio (Zebrafish).